The sequence spans 1013 residues: Nucleotide-binding oligomerization domain-containing protein 2 (1013 aa).

2 CARD domains span residues 1 to 82 and 107 to 178; these read MCSQ…AVQE and LQSH…HVQK. Positions 36 to 50 match the ATG16L1-binding motif motif; sequence WEVLSWEDYEGLRLV. ADP contacts are provided by Thr-212, Tyr-225, Thr-226, Gly-275, Ser-276, Gly-277, Lys-278, Ser-279, and Thr-280. A required for CARD9 binding region spans residues 214-247; it reads DGAENLCLEDIYTENTLEVRTEVGMAGPLHKSPA. The NACHT domain maps to 266-402; it reads DTVLVVGEAG…RKVLTSRPDA (137 aa). An ATP-binding site is contributed by 272–279; sequence GEAGSGKS. Cys-368 carries the S-palmitoyl cysteine lipid modification. An ADP-binding site is contributed by His-576. LRR repeat units follow at residues 764 to 785, 789 to 812, 817 to 838, 845 to 857, 873 to 893, 901 to 922, 929 to 949, 957 to 978, and 985 to 1005; these read RPVA…QLLP, ACKA…IEHA, QLQK…SVAQ, NFLA…NHIT, SLQF…QALA, SLKW…ALAS, ALEE…CSLA, SLKV…ALLQ, and TILE…EALS.

Belongs to the NOD1-NOD2 family. In terms of assembly, homooligomer: homooligomerizes following muramyl dipeptide (MDP)-binding, promoting RIPK2 recruitment. Interacts (via CARD domain) with RIPK2 (via CARD domain). Following RIPK2 recruitment, RIPK2 homooligomerizes via its CARD domain and forms long filaments named RIPosomes. Interacts (via CARD domain) with ubiquitin; inhibiting interaction with RIPK2. Component of a signaling complex consisting of ARHGEF2, NOD2 and RIPK2. Interacts with ANKRD17 (via N-terminus). Interacts with HSPA1A; the interaction enhances NOD2 stability. Interacts (via both CARD domains) with HSP90; the interaction enhances NOD2 stability. Interacts (via CARD domain) with SOCS3; the interaction promotes NOD2 degradation. Interacts (via CARD domain) with ERBIN; the interaction inhibits activation of NOD2. Interacts with MAPKBP1; the interaction is enhanced in the presence of muramyl dipeptide (MDP) and inhibits NOD2 homooligomerization and activation. Interacts with INAVA; the interaction takes place upon Pattern recognition receptor (PRR) stimulation. Interacts (via NACHT domain) with CARD9. Interacts (via CARD domain) with CASP1; this interaction leads to IL1B processing. Also interacts with CASP4. Interacts with NLRP1; this interaction is enhanced in the presence of muramyl dipeptide (MDP) and leads to increased IL1B release. Interacts with NLRP12; this interaction promotes degradation of NOD2 through the ubiquitin-proteasome pathway. Interacts with ANKHD1, C10orf67, CHMP5, DOCK7, ENTR1, KRT15, LDOC1, PPP1R12C, PPP2R3B, TRIM41 and VIM. Interacts with MAVS; interaction takes place following single-stranded RNA (ssRNA)-binding. Interacts with ATG16L1. Interacts with IRGM; promoting IRGM 'Lys-63'-linked polyubiquitination, which is required for interactions with the core autophagy factors. In terms of processing, palmitoylated by ZDHHC5; palmitoylation is required for proper recruitment to the bacterial entry site and hence for proper signaling upon cognate peptidoglycan detection. Palmitoylation promotes localization to the cell membrane. Palmitoylation protects from SQSTM1/p62-dependent autophagic degradation. Polyubiquitinated by TRIM27, leading to proteasome-mediated degradation. Polyubiquitinated and degraded following muramyl dipeptide (MDP) stimulation, conferring MDP tolerance and preventing septic shock. Post-translationally, degraded via selective autophagy following interaction with IRGM. IRGM promotes NOD2-RIPK2 RIPosome recruitment to autophagosome membranes, promoting their SQSTM1/p62-dependent autophagic degradation. In terms of processing, O-glycosylated by OGT, O-GlcNAcylation increases protein stability.

It is found in the cell membrane. The protein localises to the basolateral cell membrane. It localises to the cytoplasm. The protein resides in the mitochondrion. With respect to regulation, ADP-binding promotes an inactive closed conformation. In terms of biological role, pattern recognition receptor (PRR) that detects bacterial peptidoglycan fragments and other danger signals and plays an important role in gastrointestinal immunity. Specifically activated by muramyl dipeptide (MDP), a fragment of bacterial peptidoglycan found in every bacterial peptidoglycan type. NOD2 specifically recognizes and binds 6-O-phospho-MDP, the phosphorylated form of MDP, which is generated by NAGK. 6-O-phospho-MDP-binding triggers oligomerization that facilitates the binding and subsequent activation of the proximal adapter receptor-interacting RIPK2. Following recruitment, RIPK2 undergoes 'Met-1'- (linear) and 'Lys-63'-linked polyubiquitination by E3 ubiquitin-protein ligases XIAP, BIRC2, BIRC3 and the LUBAC complex, becoming a scaffolding protein for downstream effectors, triggering activation of the NF-kappa-B and MAP kinases signaling. This in turn leads to the transcriptional activation of hundreds of genes involved in immune response. Its ability to detect bacterial MDP plays a central role in maintaining the equilibrium between intestinal microbiota and host immune responses to control inflammation. An imbalance in this relationship results in dysbiosis, whereby pathogenic bacteria prevail on commensals, causing damage in the intestinal epithelial barrier as well as allowing bacterial invasion and inflammation. Acts as a regulator of appetite by sensing MDP in a subset of brain neurons: microbiota-derived MDP reach the brain, where they bind and activate NOD2 in inhibitory hypothalamic neurons, decreasing neuronal activity, thereby regulating satiety and body temperature. NOD2-dependent MDP-sensing of bacterial cell walls in the intestinal epithelial compartment contributes to sustained postnatal growth upon undernutrition. Also plays a role in antiviral response by acting as a sensor of single-stranded RNA (ssRNA) from viruses: upon ssRNA-binding, interacts with MAVS, leading to activation of interferon regulatory factor-3/IRF3 and expression of type I interferon. Also acts as a regulator of autophagy in dendritic cells via its interaction with ATG16L1, possibly by recruiting ATG16L1 at the site of bacterial entry. NOD2 activation in the small intestine crypt also contributes to intestinal stem cells survival and function: acts by promoting mitophagy via its association with ATG16L1. In addition to its main role in innate immunity, also regulates the adaptive immune system by acting as regulator of helper T-cell and regulatory T-cells (Tregs). Besides recognizing pathogens, also involved in the endoplasmic reticulum stress response: acts by sensing and binding to the cytosolic metabolite sphingosine-1-phosphate generated in response to endoplasmic reticulum stress, initiating an inflammation process that leads to activation of the NF-kappa-B and MAP kinases signaling. May also be involved in NLRP1 activation following activation by MDP, leading to CASP1 activation and IL1B release in macrophages. The sequence is that of Nucleotide-binding oligomerization domain-containing protein 2 from Oryctolagus cuniculus (Rabbit).